We begin with the raw amino-acid sequence, 131 residues long: Cell cycle protein GpsB (131 aa).

A coiled-coil region spans residues 39-76; it reads LDGIIRDYEAFTNEIDRLKEENTKLFSRVDELTKQLSV. Residues 111–131 are disordered; that stretch reads KLSDSSVDNHDDGNHSDVDQY. Over residues 117-131 the composition is skewed to basic and acidic residues; it reads VDNHDDGNHSDVDQY.

This sequence belongs to the GpsB family. Forms polymers through the coiled coil domains. Interacts with PBP1, MreC and EzrA.

It localises to the cytoplasm. Its function is as follows. Divisome component that associates with the complex late in its assembly, after the Z-ring is formed, and is dependent on DivIC and PBP2B for its recruitment to the divisome. Together with EzrA, is a key component of the system that regulates PBP1 localization during cell cycle progression. Its main role could be the removal of PBP1 from the cell pole after pole maturation is completed. Also contributes to the recruitment of PBP1 to the division complex. Not essential for septum formation. The chain is Cell cycle protein GpsB from Lacticaseibacillus casei (strain BL23) (Lactobacillus casei).